A 1364-amino-acid chain; its full sequence is Serine protease EatA (1364 aa).

The N-terminal stretch at 1-56 (MNKVFSLKYSFLAKGFIAVSELARRVSVKGKLKSASSIIISPITIAIVSYAPPSLA) is a signal peptide. Residues 57-307 (ATVNADISYQ…VVTTQDFLHQ (251 aa)) enclose the Peptidase S6 domain. Active-site charge relay system residues include histidine 134, aspartate 162, and serine 267. In terms of domain architecture, Autotransporter spans 1098–1364 (DSQGDAGGWA…SINANFRYYF (267 aa)).

In terms of processing, cleaved to release the mature protein from the outer membrane.

The protein resides in the periplasm. Its subcellular location is the secreted. The protein localises to the cell surface. It is found in the cell outer membrane. Its activity is regulated as follows. Inhibited by phenylmethylsulfonyl fluoride. Functionally, autotransporter serine protease probably involved in virulence. In Escherichia coli O78:H11 (strain H10407 / ETEC), this protein is Serine protease EatA (eatA).